Reading from the N-terminus, the 422-residue chain is Cyclin-A2 (422 aa).

Met-1 is modified (N-acetylmethionine). The tract at residues 1–62 (MPGTSRHSGR…APQQKLKTRR (62 aa)) is disordered. A Phosphoserine modification is found at Ser-5.

This sequence belongs to the cyclin family. Cyclin AB subfamily. Interacts with the CDK1 and CDK2 protein kinases to form serine/threonine kinase holoenzyme complexes. Interacts with CDK1 (hyperphosphorylated form in G1 and underphosphorylated forms in S and G2). Interacts with CDK2; the interaction increases from G1 to G2. Interacts (associated with CDK2 but not with CDK1) with SCAPER; regulates the activity of CCNA2/CDK2 by transiently maintaining CCNA2 in the cytoplasm. Forms a ternary complex with CDK2 and CDKN1B; CDKN1B inhibits the kinase activity of CDK2 through conformational rearrangements. Interacts with INCA1. In terms of assembly, (Microbial infection) Interacts with mouse cytomegalovirus/MCMV kinase M97; this interaction sequesters CCNA2 to the cytoplasm. In terms of processing, polyubiquitinated via 'Lys-11'-linked ubiquitin by the anaphase-promoting complex (APC/C), leading to its degradation by the proteasome. Deubiquitinated and stabilized by USP37 enables entry into S phase. Ubiquitinated during the G1 phase by the SCF(FBXO31) complex, leading to its proteasomal degradation. As to expression, ubiquitous. In the testis, expressed in germ cells and in the ovary, in both germline and somatic cells.

The protein resides in the nucleus. It localises to the cytoplasm. In terms of biological role, cyclin which controls both the G1/S and the G2/M transition phases of the cell cycle. Functions through the formation of specific serine/threonine kinase holoenzyme complexes with the cyclin-dependent protein kinases CDK1 and CDK2. The cyclin subunit confers the substrate specificity of these complexes and differentially interacts with and activates CDK1 and CDK2 throughout the cell cycle. This Mus musculus (Mouse) protein is Cyclin-A2.